A 367-amino-acid polypeptide reads, in one-letter code: Alanine racemase (367 aa).

Catalysis depends on lysine 35, which acts as the Proton acceptor; specific for D-alanine. Lysine 35 is modified (N6-(pyridoxal phosphate)lysine). Arginine 130 contributes to the substrate binding site. Residue tyrosine 256 is the Proton acceptor; specific for L-alanine of the active site. Position 304 (methionine 304) interacts with substrate.

The protein belongs to the alanine racemase family. It depends on pyridoxal 5'-phosphate as a cofactor.

It catalyses the reaction L-alanine = D-alanine. The protein operates within amino-acid biosynthesis; D-alanine biosynthesis; D-alanine from L-alanine: step 1/1. Functionally, catalyzes the interconversion of L-alanine and D-alanine. May also act on other amino acids. The protein is Alanine racemase (alr) of Methylibium petroleiphilum (strain ATCC BAA-1232 / LMG 22953 / PM1).